Consider the following 427-residue polypeptide: Synaptotagmin-A (427 aa).

Residues 1–57 are Vesicular-facing; that stretch reads MKLTEAYHDALAALPATPPLPTAVANATEAAAGSEEGKQDGFSKVKVKEKFMNELNK. The N-linked (GlcNAc...) asparagine glycan is linked to Asn26. Residues 58–84 form a helical membrane-spanning segment; the sequence is IPLPPWALVAIAIVAIILGLTCCFCIC. Over 85-427 the chain is Cytoplasmic; it reads KKCLLKKKNK…EVDATLGMKK (343 aa). The segment at 96–145 is disordered; the sequence is KGKEKGGKNAMTMKDVKEMGKSGKEQALKDEDEDAETGLTTDGKEEEKED. Residues 109 to 124 show a composition bias toward basic and acidic residues; it reads KDVKEMGKSGKEQALK. The segment at 141 to 387 is phospholipid binding; sequence EEKEDEKLGK…AIGKVFVGYN (247 aa). 2 consecutive C2 domains span residues 147–266 and 278–411; these read KLGK…EEWR and KLGD…AQWH. Leu177, Asp178, Asp184, Asp236, Phe237, Asp238, Ser241, Lys242, Asp244, Asp309, Asp315, Asp369, Asp371, and Asp377 together coordinate Ca(2+).

This sequence belongs to the synaptotagmin family. Homodimer or homotrimer (possible). Requires Ca(2+) as cofactor. In terms of tissue distribution, forebrain, cerebellum and neuroendocrine cells.

It localises to the cytoplasmic vesicle. The protein resides in the secretory vesicle. The protein localises to the synaptic vesicle membrane. Its subcellular location is the synapse. In terms of biological role, may have a regulatory role in the membrane interactions during trafficking of synaptic vesicles at the active zone of the synapse. It binds acidic phospholipids with a specificity that requires the presence of both an acidic head group and a diacyl backbone. The chain is Synaptotagmin-A (P65-A) from Diplobatis ommata (Ocellated electric ray).